The sequence spans 80 residues: Conotoxin SmIVA (80 aa).

The N-terminal stretch at 1–21 (MGMRMMFTVFLLVVLATTVVS) is a signal peptide. A propeptide spanning residues 22-38 (IPSDRASDGRNAAVNER) is cleaved from the precursor. Gln-39 is subject to Pyrrolidone carboxylic acid. A glycan (O-linked (HexNAc...) serine) is linked at Ser-45. 4-hydroxyproline is present on residues Pro-55, Pro-60, Pro-70, and Pro-72. Ser-75 is subject to Serine amide. A propeptide spanning residues 76–80 (GRRND) is cleaved from the precursor.

The protein belongs to the conotoxin A superfamily. Post-translationally, contains 3 disulfide bonds. Expressed by the venom duct.

Its subcellular location is the secreted. Its function is as follows. Neurotoxin with probable activity on sodium channel. Induces intense repetitive firing of the frog neuromuscular junction, leading to a tetanic contracture in muscle fiber (spastic paralysis). In vivo, shows the same effect as the whole venom when injected on fish prey. This Conus stercusmuscarum (Fly-specked cone) protein is Conotoxin SmIVA.